The primary structure comprises 85 residues: MEVVLHLAGHCIETSAKKRYEMLVQELLKEDDEEREKILAEELELLLDFLKKADFSELRRRGFDGSREMRVRVKKVGEEFVVEEI.

A coiled-coil region spans residues 17-53 (KKRYEMLVQELLKEDDEEREKILAEELELLLDFLKKA).

This is an uncharacterized protein from Archaeoglobus fulgidus (strain ATCC 49558 / DSM 4304 / JCM 9628 / NBRC 100126 / VC-16).